Reading from the N-terminus, the 186-residue chain is CASP-like protein 6 (186 aa).

At 1-26 the chain is on the cytoplasmic side; the sequence is MKAGAVESGEISKGAPPRKGLIRGLS. Residues 27–47 form a helical membrane-spanning segment; it reads IMDFILRIVAAIATLGSALGM. Over 48 to 72 the chain is Extracellular; the sequence is GTTRQTLPFSTQFVKFRAVFSDVPT. Residues 73 to 93 traverse the membrane as a helical segment; it reads FVFFVTSNSIVCGYLVLSLVL. Over 94 to 110 the chain is Cytoplasmic; that stretch reads SFFHIVRSAAVKSRVLQ. Residues 111-131 form a helical membrane-spanning segment; it reads VFLDTVMYGLLTTGASAATAI. The Extracellular segment spans residues 132–162; it reads VYEAHYGNSNTNWFPFCRQYNHFCKQISGSL. Residues 163-183 traverse the membrane as a helical segment; it reads IGSFIAVVLFIILILMSAISI. Residues 184 to 186 are Cytoplasmic-facing; that stretch reads SKH.

The protein belongs to the Casparian strip membrane proteins (CASP) family. In terms of assembly, homodimer and heterodimers.

It localises to the cell membrane. Regulates membrane-cell wall junctions and localized cell wall deposition. Required for establishment of the Casparian strip membrane domain (CSD) and the subsequent formation of Casparian strips, a cell wall modification of the root endodermis that determines an apoplastic barrier between the intraorganismal apoplasm and the extraorganismal apoplasm and prevents lateral diffusion. The sequence is that of CASP-like protein 6 from Glycine max (Soybean).